We begin with the raw amino-acid sequence, 532 residues long: uncharacterized protein (532 aa).

Disordered stretches follow at residues 26–84 (KALR…TDSE), 97–129 (VFDE…QVGR), and 157–470 (SKAA…HTCQ). The span at 30 to 40 (GNNNGSSTSGG) shows a compositional bias: low complexity. Residues 67–80 (DIISQARRQVSLSR) are compositionally biased toward polar residues. A compositionally biased stretch (basic and acidic residues) spans 157 to 181 (SKAAGEESKRHAHFESIQEEEKISE). Residues 198 to 213 (IQSGSESSDSDSIIFD) are compositionally biased toward low complexity. Residues 237 to 249 (VEKKIEKPAVKEQ) are compositionally biased toward basic and acidic residues. Composition is skewed to low complexity over residues 259–290 (PTPT…SASE), 298–315 (ESQV…SSSK), and 326–335 (SSSSSASTIS). Basic residues predominate over residues 347 to 356 (KTKKPDKKRA). 4 stretches are compositionally biased toward basic and acidic residues: residues 357-368 (KPDDIRQNKKPE), 389-403 (STVR…ESLK), 410-419 (KSSEKMEKPR), and 437-448 (RDAEREQDIERR). Over residues 449 to 461 (REKRARRFRSRRR) the composition is skewed to basic residues.

This is an uncharacterized protein from Caenorhabditis elegans.